Here is a 166-residue protein sequence, read N- to C-terminus: MVKTLIFKTIKDYSFIKGKLQEIINEHDSGPLSESGNIILVNNPKLHLFTSTFKEDDVRFLEVIKLFNKIDELQYLNGKIKSSENNYGDIVIYFTPTKEQKQYIDQILKLEGLKKNPVALTIGTIKENFNISMEKREAGLKVLMRKVYSFFRGKKITFDEAQSITF.

This is an uncharacterized protein from Invertebrate iridescent virus 6 (IIV-6).